The following is a 115-amino-acid chain: Holo-[acyl-carrier-protein] synthase (115 aa).

Residues Asp6 and Glu51 each coordinate Mg(2+).

Belongs to the P-Pant transferase superfamily. AcpS family. Mg(2+) serves as cofactor.

Its subcellular location is the cytoplasm. It catalyses the reaction apo-[ACP] + CoA = holo-[ACP] + adenosine 3',5'-bisphosphate + H(+). Transfers the 4'-phosphopantetheine moiety from coenzyme A to a Ser of acyl-carrier-protein. The protein is Holo-[acyl-carrier-protein] synthase of Campylobacter jejuni subsp. doylei (strain ATCC BAA-1458 / RM4099 / 269.97).